A 385-amino-acid chain; its full sequence is Chaperone protein DnaJ (385 aa).

Residues 5–70 form the J domain; it reads DYYEVLGVAK…QKRAAYDRFG (66 aa). The CR-type zinc-finger motif lies at 141–219; sequence GKTETIRIPT…CSGAGRVNRE (79 aa). Residues C154, C157, C171, C174, C193, C196, C207, and C210 each coordinate Zn(2+). CXXCXGXG motif repeat units follow at residues 154-161, 171-178, 193-200, and 207-214; these read CETCSGTG, CSTCGGYG, CPNCHGRG, and CTACSGAG.

This sequence belongs to the DnaJ family. Homodimer. The cofactor is Zn(2+).

It is found in the cytoplasm. Its function is as follows. Participates actively in the response to hyperosmotic and heat shock by preventing the aggregation of stress-denatured proteins and by disaggregating proteins, also in an autonomous, DnaK-independent fashion. Unfolded proteins bind initially to DnaJ; upon interaction with the DnaJ-bound protein, DnaK hydrolyzes its bound ATP, resulting in the formation of a stable complex. GrpE releases ADP from DnaK; ATP binding to DnaK triggers the release of the substrate protein, thus completing the reaction cycle. Several rounds of ATP-dependent interactions between DnaJ, DnaK and GrpE are required for fully efficient folding. Also involved, together with DnaK and GrpE, in the DNA replication of plasmids through activation of initiation proteins. In Methylorubrum extorquens (strain PA1) (Methylobacterium extorquens), this protein is Chaperone protein DnaJ.